A 275-amino-acid polypeptide reads, in one-letter code: uncharacterized protein (275 aa).

Glu-71, Asp-85, Ile-87, and Asp-88 together coordinate Mg(2+). A substrate-binding site is contributed by Glu-71. 87–90 lines the substrate pocket; sequence IDGT. Transmembrane regions (helical) follow at residues 87 to 107, 112 to 132, and 178 to 198; these read IDGT…IAFV, PVLG…SVDG, and IVCL…RLAG. Asp-208 is a Mg(2+) binding site. Residue Asp-208 participates in substrate binding.

The protein belongs to the inositol monophosphatase superfamily.

The protein localises to the cell membrane. This is an uncharacterized protein from Sinorhizobium fredii (strain NBRC 101917 / NGR234).